An 81-amino-acid polypeptide reads, in one-letter code: ATP synthase subunit c, chloroplastic (81 aa).

2 helical membrane passes run 7–27 and 57–77; these read AASVIAAGLSVGLASIGPGIG and LAFMEALTIYGLVVALALLFA.

Belongs to the ATPase C chain family. F-type ATPases have 2 components, F(1) - the catalytic core - and F(0) - the membrane proton channel. F(1) has five subunits: alpha(3), beta(3), gamma(1), delta(1), epsilon(1). F(0) has four main subunits: a(1), b(1), b'(1) and c(10-14). The alpha and beta chains form an alternating ring which encloses part of the gamma chain. F(1) is attached to F(0) by a central stalk formed by the gamma and epsilon chains, while a peripheral stalk is formed by the delta, b and b' chains.

The protein localises to the plastid. The protein resides in the chloroplast thylakoid membrane. F(1)F(0) ATP synthase produces ATP from ADP in the presence of a proton or sodium gradient. F-type ATPases consist of two structural domains, F(1) containing the extramembraneous catalytic core and F(0) containing the membrane proton channel, linked together by a central stalk and a peripheral stalk. During catalysis, ATP synthesis in the catalytic domain of F(1) is coupled via a rotary mechanism of the central stalk subunits to proton translocation. In terms of biological role, key component of the F(0) channel; it plays a direct role in translocation across the membrane. A homomeric c-ring of between 10-14 subunits forms the central stalk rotor element with the F(1) delta and epsilon subunits. This chain is ATP synthase subunit c, chloroplastic, found in Cryptomeria japonica (Japanese cedar).